Here is a 175-residue protein sequence, read N- to C-terminus: UPF0398 protein SSA_1858 (175 aa).

Belongs to the UPF0398 family.

The chain is UPF0398 protein SSA_1858 from Streptococcus sanguinis (strain SK36).